Consider the following 563-residue polypeptide: Delta-1-pyrroline-5-carboxylate dehydrogenase, mitochondrial (563 aa).

A mitochondrion-targeting transit peptide spans 1 to 23 (MLPPALLRRSLLSYAWRGSGLRW). Lysine 30 carries the post-translational modification N6-succinyllysine. Residue serine 43 is modified to Phosphoserine. An N6-acetyllysine modification is found at lysine 51. Lysine 92, lysine 98, lysine 113, lysine 129, and lysine 174 each carry N6-acetyllysine; alternate. N6-succinyllysine; alternate is present on residues lysine 92, lysine 98, lysine 113, lysine 129, and lysine 174. NAD(+) is bound by residues serine 207, lysine 232, and 285-289 (GSVPT). Glutamate 313 acts as the Proton acceptor in catalysis. Position 317 is an N6-acetyllysine (lysine 317). An N6-succinyllysine modification is found at lysine 346. The active-site Nucleophile is the cysteine 347. Residues lysine 364 and lysine 375 each carry the N6-acetyllysine modification. Lysine 394 is modified (N6-succinyllysine). Position 446 (glutamate 446) interacts with NAD(+). Lysine 461 carries the post-translational modification N6-acetyllysine. Lysine 508 carries the N6-acetyllysine; alternate modification. Position 508 is an N6-succinyllysine; alternate (lysine 508). Residue serine 512 participates in substrate binding.

It belongs to the aldehyde dehydrogenase family. Homodimer.

It is found in the mitochondrion matrix. It catalyses the reaction L-glutamate 5-semialdehyde + NAD(+) + H2O = L-glutamate + NADH + 2 H(+). Its pathway is amino-acid degradation; L-proline degradation into L-glutamate; L-glutamate from L-proline: step 2/2. Its function is as follows. Irreversible conversion of delta-1-pyrroline-5-carboxylate (P5C), derived either from proline or ornithine, to glutamate. This is a necessary step in the pathway interconnecting the urea and tricarboxylic acid cycles. The preferred substrate is glutamic gamma-semialdehyde, other substrates include succinic, glutaric and adipic semialdehydes. This chain is Delta-1-pyrroline-5-carboxylate dehydrogenase, mitochondrial (Aldh4a1), found in Rattus norvegicus (Rat).